The following is a 172-amino-acid chain: Protein-export protein SecB (172 aa).

Belongs to the SecB family. Homotetramer, a dimer of dimers. One homotetramer interacts with 1 SecA dimer.

It localises to the cytoplasm. In terms of biological role, one of the proteins required for the normal export of preproteins out of the cell cytoplasm. It is a molecular chaperone that binds to a subset of precursor proteins, maintaining them in a translocation-competent state. It also specifically binds to its receptor SecA. The protein is Protein-export protein SecB of Xylella fastidiosa (strain 9a5c).